Reading from the N-terminus, the 132-residue chain is Small ribosomal subunit protein uS9 (132 aa).

The protein belongs to the universal ribosomal protein uS9 family.

This is Small ribosomal subunit protein uS9 from Leptospira borgpetersenii serovar Hardjo-bovis (strain JB197).